The primary structure comprises 227 residues: ATP synthase subunit a (227 aa).

Helical transmembrane passes span 14–34 (LLNIPLVLLALIMPWKLFVSF), 69–89 (WVVLFSSLMLMLMTLNVIGLF), 98–118 (QLSMNLGLAVPLWLGTVVYGF), 137–157 (LLVPVLVVVETLSILMRPLAL), 169–189 (HLLMHLISSAVLGLMELSVML), and 205–223 (IAVALIQGYVFAILVTLYL).

Belongs to the ATPase A chain family. As to quaternary structure, F-type ATPases have 2 components, CF(1) - the catalytic core - and CF(0) - the membrane proton channel. CF(1) has five subunits: alpha(3), beta(3), gamma(1), delta(1), epsilon(1). CF(0) has three main subunits: a, b and c.

It localises to the mitochondrion inner membrane. Functionally, mitochondrial membrane ATP synthase (F(1)F(0) ATP synthase or Complex V) produces ATP from ADP in the presence of a proton gradient across the membrane which is generated by electron transport complexes of the respiratory chain. F-type ATPases consist of two structural domains, F(1) - containing the extramembraneous catalytic core and F(0) - containing the membrane proton channel, linked together by a central stalk and a peripheral stalk. During catalysis, ATP synthesis in the catalytic domain of F(1) is coupled via a rotary mechanism of the central stalk subunits to proton translocation. Key component of the proton channel; it may play a direct role in the translocation of protons across the membrane. The sequence is that of ATP synthase subunit a (ATP6) from Branchiostoma floridae (Florida lancelet).